A 467-amino-acid polypeptide reads, in one-letter code: Argininosuccinate lyase (467 aa).

The protein belongs to the lyase 1 family. Argininosuccinate lyase subfamily.

It is found in the cytoplasm. It catalyses the reaction 2-(N(omega)-L-arginino)succinate = fumarate + L-arginine. It functions in the pathway amino-acid biosynthesis; L-arginine biosynthesis; L-arginine from L-ornithine and carbamoyl phosphate: step 3/3. In Chromohalobacter salexigens (strain ATCC BAA-138 / DSM 3043 / CIP 106854 / NCIMB 13768 / 1H11), this protein is Argininosuccinate lyase.